The sequence spans 318 residues: Pantothenate kinase (318 aa).

96–103 lines the ATP pocket; sequence GSVAVGKS.

The protein belongs to the prokaryotic pantothenate kinase family.

It localises to the cytoplasm. The catalysed reaction is (R)-pantothenate + ATP = (R)-4'-phosphopantothenate + ADP + H(+). It functions in the pathway cofactor biosynthesis; coenzyme A biosynthesis; CoA from (R)-pantothenate: step 1/5. The sequence is that of Pantothenate kinase from Coxiella burnetii (strain CbuK_Q154) (Coxiella burnetii (strain Q154)).